Reading from the N-terminus, the 274-residue chain is Ribosome biogenesis protein UTP30 (274 aa).

It belongs to the universal ribosomal protein uL1 family. Highly divergent. In terms of assembly, component of the 90S pre-ribosomes. Interacts with FAF1.

It is found in the nucleus. The protein resides in the nucleolus. In terms of biological role, involved in rRNA-processing and ribosome biosynthesis. The sequence is that of Ribosome biogenesis protein UTP30 (UTP30) from Saccharomyces cerevisiae (strain ATCC 204508 / S288c) (Baker's yeast).